Reading from the N-terminus, the 100-residue chain is Cell division topological specificity factor (100 aa).

The protein belongs to the MinE family.

Prevents the cell division inhibition by proteins MinC and MinD at internal division sites while permitting inhibition at polar sites. This ensures cell division at the proper site by restricting the formation of a division septum at the midpoint of the long axis of the cell. This chain is Cell division topological specificity factor, found in Blochmanniella floridana.